The chain runs to 287 residues: MANRKRDAGREALEKKGWWRSHRWLVLRRLCQFFVLGMFLSGPWFGVWILHGNYSSSLLFDTVPLTDPLMTLQSLASGHLPATVALTGAVIITVLYALAGKRLFCSWVCPLNPITDLANWLRRRFDLNQSATIPRHIRYVLLVVILVGSALTGTLIWEWINPVSLMGRSLVMGFGSGALLILALFLFDLLVVEHGWCGHICPVGALYGVLGSKGVITVAATDRQKCNRCMDCFHVCPEPHVLRAPVLDEQSPVQVTSRDCMTCGRCVDVCSEDVFTITTRWSSGAKS.

The Cytoplasmic segment spans residues 1–29 (MANRKRDAGREALEKKGWWRSHRWLVLRR). A helical transmembrane segment spans residues 30–50 (LCQFFVLGMFLSGPWFGVWIL). At 51 to 79 (HGNYSSSLLFDTVPLTDPLMTLQSLASGH) the chain is on the periplasmic side. The chain crosses the membrane as a helical span at residues 80–100 (LPATVALTGAVIITVLYALAG). The Cytoplasmic segment spans residues 101 to 139 (KRLFCSWVCPLNPITDLANWLRRRFDLNQSATIPRHIRY). A helical membrane pass occupies residues 140–160 (VLLVVILVGSALTGTLIWEWI). Topologically, residues 161-170 (NPVSLMGRSL) are periplasmic. A helical transmembrane segment spans residues 171 to 191 (VMGFGSGALLILALFLFDLLV). Over 192 to 287 (VEHGWCGHIC…TTRWSSGAKS (96 aa)) the chain is Cytoplasmic. 4Fe-4S ferredoxin-type domains are found at residues 217–247 (TVAATDRQKCNRCMDCFHVCPEPHVLRAPVL) and 251–280 (SPVQVTSRDCMTCGRCVDVCSEDVFTITTR). The [4Fe-4S] cluster site is built by cysteine 226, cysteine 229, cysteine 232, cysteine 236, cysteine 260, cysteine 263, cysteine 266, and cysteine 270.

As to quaternary structure, interacts with NapC. Requires [4Fe-4S] cluster as cofactor.

Its subcellular location is the cell inner membrane. In terms of biological role, required for electron transfer from ubiquinol, via NapC, to the periplasmic nitrate reductase NapAB complex. In Escherichia coli (strain K12), this protein is Ferredoxin-type protein NapH (napH).